The sequence spans 570 residues: Dihydroxy-acid dehydratase (570 aa).

Cys61 is a [2Fe-2S] cluster binding site. Mg(2+) is bound at residue Asp94. Cys135 contributes to the [2Fe-2S] cluster binding site. Asp136 and Lys137 together coordinate Mg(2+). At Lys137 the chain carries N6-carboxylysine. A [2Fe-2S] cluster-binding site is contributed by Cys207. A Mg(2+)-binding site is contributed by Glu459. Ser485 serves as the catalytic Proton acceptor.

This sequence belongs to the IlvD/Edd family. As to quaternary structure, homodimer. The cofactor is [2Fe-2S] cluster. Requires Mg(2+) as cofactor.

The enzyme catalyses (2R)-2,3-dihydroxy-3-methylbutanoate = 3-methyl-2-oxobutanoate + H2O. It catalyses the reaction (2R,3R)-2,3-dihydroxy-3-methylpentanoate = (S)-3-methyl-2-oxopentanoate + H2O. The protein operates within amino-acid biosynthesis; L-isoleucine biosynthesis; L-isoleucine from 2-oxobutanoate: step 3/4. It functions in the pathway amino-acid biosynthesis; L-valine biosynthesis; L-valine from pyruvate: step 3/4. Its function is as follows. Functions in the biosynthesis of branched-chain amino acids. Catalyzes the dehydration of (2R,3R)-2,3-dihydroxy-3-methylpentanoate (2,3-dihydroxy-3-methylvalerate) into 2-oxo-3-methylpentanoate (2-oxo-3-methylvalerate) and of (2R)-2,3-dihydroxy-3-methylbutanoate (2,3-dihydroxyisovalerate) into 2-oxo-3-methylbutanoate (2-oxoisovalerate), the penultimate precursor to L-isoleucine and L-valine, respectively. This is Dihydroxy-acid dehydratase from Lactococcus lactis subsp. lactis (strain IL1403) (Streptococcus lactis).